A 205-amino-acid polypeptide reads, in one-letter code: ATP-dependent dethiobiotin synthetase BioD (205 aa).

A Mg(2+)-binding site is contributed by Thr16. Lys32 is a catalytic residue. Residue Thr36 participates in substrate binding. Glu97 provides a ligand contact to Mg(2+). 97-100 (EGAG) is an ATP binding site.

The protein belongs to the dethiobiotin synthetase family. As to quaternary structure, homodimer. Mg(2+) is required as a cofactor.

It is found in the cytoplasm. It carries out the reaction (7R,8S)-7,8-diammoniononanoate + CO2 + ATP = (4R,5S)-dethiobiotin + ADP + phosphate + 3 H(+). Its pathway is cofactor biosynthesis; biotin biosynthesis; biotin from 7,8-diaminononanoate: step 1/2. In terms of biological role, catalyzes a mechanistically unusual reaction, the ATP-dependent insertion of CO2 between the N7 and N8 nitrogen atoms of 7,8-diaminopelargonic acid (DAPA, also called 7,8-diammoniononanoate) to form a ureido ring. This chain is ATP-dependent dethiobiotin synthetase BioD, found in Paramagnetospirillum magneticum (strain ATCC 700264 / AMB-1) (Magnetospirillum magneticum).